The chain runs to 297 residues: HTH-type transcriptional regulator ArgP (297 aa).

The HTH lysR-type domain maps to 4–60 (PDYRTLQALDAVIRERGFERAAQKLCITQSAVSQRIKQLENMFGQPLLVRTVPPRPT). Residues 21–40 (FERAAQKLCITQSAVSQRIK) constitute a DNA-binding region (H-T-H motif).

This sequence belongs to the LysR transcriptional regulatory family. Homodimer.

In terms of biological role, controls the transcription of genes involved in arginine and lysine metabolism. This is HTH-type transcriptional regulator ArgP from Escherichia fergusonii (strain ATCC 35469 / DSM 13698 / CCUG 18766 / IAM 14443 / JCM 21226 / LMG 7866 / NBRC 102419 / NCTC 12128 / CDC 0568-73).